The following is a 155-amino-acid chain: Small ribosomal subunit protein uS7 (155 aa).

Belongs to the universal ribosomal protein uS7 family. As to quaternary structure, part of the 30S ribosomal subunit. Contacts proteins S9 and S11.

Its function is as follows. One of the primary rRNA binding proteins, it binds directly to 16S rRNA where it nucleates assembly of the head domain of the 30S subunit. Is located at the subunit interface close to the decoding center, probably blocks exit of the E-site tRNA. The polypeptide is Small ribosomal subunit protein uS7 (Mycoplasma capricolum subsp. capricolum (strain California kid / ATCC 27343 / NCTC 10154)).